The following is a 726-amino-acid chain: MKKLLVALSLIAGSLTASAQWGRPVDYAAGPGLKDAYKDYFTVGVAVNKFNISDPAQTAIVKKQFNSVTAENAWKPGEIHPKEGVWNFGLADSIANFCRENGIKMRGHCLCWHSQFADWMFTDKKGKPVKKEVFYQRLREHIHTVVNRYKDVVYAWDVVNEAMADDGRPFEFVDGKMVPASPYRQSRHFKLCGDEFIAKAFEFAREADPTGVLMYNDYSCVDEGKRERIYNMVKKMKEAGVPIDGIGMQGHYNIYFPDEEKLEKAINRFSEIVNTIHITELDLRTNTESGGQLMFSRGEAKPQPGYMQTLQEDQYARLFKIFRKHKDVIKNVTFWNLSDKDSWLGVNNHPLPFDENFKAKRSLQIIRDFDAAMDNRKPKEDFVPNPMNQPGQEYPMVNSEGYARFRVEAPDAKSVIVSLGLGGRGGTVLRKDKNGVWTGTTEGPMDPGFHYYHLTIDGGVFNDPGTHNYFGSCRWESGIEIPAKDQDFYAYRKDINHGNIQQVTFWSESTGKMQTANVYLPYGYGKVVKGKQERYPVLYLQHGWGENETSWPVQGKAGLIMDNLIADGKIKPFIVVMAYGLTNDFKFGSIGKFTAEEFEKVLIDELIPTIDKNFLTKADKWNRAMAGLSMGGMETKLITLRRPEMFGYWGLLSGGTYMPEEIKDPKAVKYIFVGCGDKENPEGINKSVEALKAAGFKAEGLVSEGTAHEFLTWRRCLEKMAQSLFK.

A signal peptide spans 1–19 (MKKLLVALSLIAGSLTASA). The region spanning 27–369 (YAAGPGLKDA…KRSLQIIRDF (343 aa)) is the GH10 domain. Glu-161 acts as the Proton donor; for xylanase activity in catalysis. Glu-280 acts as the Nucleophile; for xylanase activity in catalysis. Positions 370 to 726 (DAAMDNRKPK…LEKMAQSLFK (357 aa)) are feruloyl esterase. Ser-629 serves as the catalytic Nucleophile; for esterase activity.

This sequence in the N-terminal section; belongs to the glycosyl hydrolase 10 (cellulase F) family. As to quaternary structure, monomer or homodimer.

The catalysed reaction is Endohydrolysis of (1-&gt;4)-beta-D-xylosidic linkages in xylans.. The enzyme catalyses feruloyl-polysaccharide + H2O = ferulate + polysaccharide.. Its pathway is glycan degradation; xylan degradation. Functionally, involved in degradation of plant cell wall polysaccharides. Has endo-xylanase activity towards substrates such as oat spelt xylan (OSX), acetylated xylo-oligosaccharides and acetylated xylan, producing primarily xylobiose; cannot hydrolyze xylobiose to xylose. Also has feruloyl esterase activity, releasing ferulic acid from methylferulate, and from the more natural substrates wheat bran, corn fiber, and XOS(FA,Ac), a corn fiber-derived substrate enriched in O-acetyl and ferulic acid esters. Exhibits negligible acetyl esterase activity on sugar acetates. Acts synergistically with Xyl3A to increase the release of xylose from xylan. Does not possess endoglucanase or mannanase activities since it is not able to hydrolyze carboxymethyl cellulose and locust bean gum. The polypeptide is Endo-1,4-beta-xylanase/feruloyl esterase (Xylanibacter ruminicola (strain ATCC 19189 / DSM 19721 / CIP 105475 / JCM 8958 / 23) (Prevotella ruminicola)).